Consider the following 479-residue polypeptide: Glutamyl-tRNA(Gln) amidotransferase subunit A (479 aa).

Active-site charge relay system residues include lysine 75 and serine 150. Residue serine 174 is the Acyl-ester intermediate of the active site.

The protein belongs to the amidase family. GatA subfamily. In terms of assembly, heterotrimer of A, B and C subunits.

The enzyme catalyses L-glutamyl-tRNA(Gln) + L-glutamine + ATP + H2O = L-glutaminyl-tRNA(Gln) + L-glutamate + ADP + phosphate + H(+). Allows the formation of correctly charged Gln-tRNA(Gln) through the transamidation of misacylated Glu-tRNA(Gln) in organisms which lack glutaminyl-tRNA synthetase. The reaction takes place in the presence of glutamine and ATP through an activated gamma-phospho-Glu-tRNA(Gln). The protein is Glutamyl-tRNA(Gln) amidotransferase subunit A of Synechococcus elongatus (strain ATCC 33912 / PCC 7942 / FACHB-805) (Anacystis nidulans R2).